The sequence spans 376 residues: NIF3-like protein 1 (376 aa).

Residue K108 is modified to N6-acetyllysine. Positions L243 to V376 are mediates interaction with COPS2. T254 is modified (phosphothreonine). S258 is modified (phosphoserine).

It belongs to the GTP cyclohydrolase I type 2/NIF3 family. Homodimer. Interacts with COPS2. Interacts with THOC7. As to expression, ubiquitous. Detected in all tissues tested with higher expression in cerebellum, heart and kidney and to a lower level in cerebrum, lung, liver, spleen and muscle.

It is found in the cytoplasm. It localises to the nucleus. Its function is as follows. May function as a transcriptional corepressor through its interaction with COPS2, negatively regulating the expression of genes involved in neuronal differentiation. The polypeptide is NIF3-like protein 1 (Mus musculus (Mouse)).